The primary structure comprises 196 residues: Imidazoleglycerol-phosphate dehydratase (196 aa).

This sequence belongs to the imidazoleglycerol-phosphate dehydratase family.

The protein localises to the cytoplasm. It carries out the reaction D-erythro-1-(imidazol-4-yl)glycerol 3-phosphate = 3-(imidazol-4-yl)-2-oxopropyl phosphate + H2O. It functions in the pathway amino-acid biosynthesis; L-histidine biosynthesis; L-histidine from 5-phospho-alpha-D-ribose 1-diphosphate: step 6/9. The protein is Imidazoleglycerol-phosphate dehydratase of Phenylobacterium zucineum (strain HLK1).